A 340-amino-acid polypeptide reads, in one-letter code: 4-hydroxythreonine-4-phosphate dehydrogenase (340 aa).

The substrate site is built by His141 and Thr142. A divalent metal cation contacts are provided by His177, His222, and His277. Substrate contacts are provided by Lys285, Asn294, and Arg303.

This sequence belongs to the PdxA family. Homodimer. Zn(2+) serves as cofactor. The cofactor is Mg(2+). It depends on Co(2+) as a cofactor.

The protein localises to the cytoplasm. The enzyme catalyses 4-(phosphooxy)-L-threonine + NAD(+) = 3-amino-2-oxopropyl phosphate + CO2 + NADH. It functions in the pathway cofactor biosynthesis; pyridoxine 5'-phosphate biosynthesis; pyridoxine 5'-phosphate from D-erythrose 4-phosphate: step 4/5. Catalyzes the NAD(P)-dependent oxidation of 4-(phosphooxy)-L-threonine (HTP) into 2-amino-3-oxo-4-(phosphooxy)butyric acid which spontaneously decarboxylates to form 3-amino-2-oxopropyl phosphate (AHAP). The polypeptide is 4-hydroxythreonine-4-phosphate dehydrogenase (Maricaulis maris (strain MCS10) (Caulobacter maris)).